Consider the following 325-residue polypeptide: UPF0285 protein MM_0679 (325 aa).

It belongs to the UPF0285 family.

The polypeptide is UPF0285 protein MM_0679 (Methanosarcina mazei (strain ATCC BAA-159 / DSM 3647 / Goe1 / Go1 / JCM 11833 / OCM 88) (Methanosarcina frisia)).